Here is a 523-residue protein sequence, read N- to C-terminus: Arylsulfatase K (523 aa).

Positions 1–16 (MLRVFVLLIFNVNAYC) are cleaved as a signal peptide. The Ca(2+) site is built by Asp35 and Cys75. The active-site Nucleophile is Cys75. Cys75 is subject to 3-oxoalanine (Cys). A glycan (N-linked (GlcNAc...) asparagine) is linked at Asn103. Substrate-binding residues include Lys123 and His246. N-linked (GlcNAc...) asparagine glycosylation is present at Asn257. Positions 308 and 309 each coordinate Ca(2+). Asn405 carries an N-linked (GlcNAc...) asparagine glycan.

The protein belongs to the sulfatase family. Ca(2+) is required as a cofactor. Post-translationally, the conversion to 3-oxoalanine (also known as C-formylglycine, FGly), of a serine or cysteine residue in prokaryotes and of a cysteine residue in eukaryotes, is critical for catalytic activity.

The protein localises to the secreted. Its subcellular location is the lysosome. The catalysed reaction is an aryl sulfate + H2O = a phenol + sulfate + H(+). It carries out the reaction Hydrolysis of the 2-sulfate groups of the 2-O-sulfo-D-glucuronate residues of chondroitin sulfate, heparin and heparitin sulfate.. Its function is as follows. Catalyzes the hydrolysis of pseudosubstrates such as p-nitrocatechol sulfate and p-nitrophenyl sulfate. Catalyzes the hydrolysis of the 2-sulfate groups of the 2-O-sulfo-D-glucuronate residues of chondroitin sulfate, heparin and heparitin sulfate. Acts selectively on 2-sulfoglucuronate and lacks activity against 2-sulfoiduronate. The polypeptide is Arylsulfatase K (arsk) (Danio rerio (Zebrafish)).